A 282-amino-acid polypeptide reads, in one-letter code: GDT1-like protein 4 (282 aa).

Residues 1–26 form the signal peptide; that stretch reads MARRVSTTRLLLLLLLVAAAAAAAAA. The next 6 membrane-spanning stretches (helical) occupy residues 67–87, 106–126, 138–158, 189–209, 227–247, and 259–279; these read AGLG…VSEI, TVLS…TGLG, TNSA…YIAW, IFSR…FLAE, AVGV…FAVV, and GTVA…SYFY.

The protein belongs to the GDT1 family.

Its subcellular location is the membrane. The sequence is that of GDT1-like protein 4 from Oryza sativa subsp. japonica (Rice).